Reading from the N-terminus, the 464-residue chain is Adenosylhomocysteinase (464 aa).

Residues T56, D131, and E190 each coordinate substrate. 191-193 contacts NAD(+); sequence TTT. Substrate contacts are provided by K220 and D224. Residues N225, 254-259, E277, N312, 333-335, and N378 contribute to the NAD(+) site; these read GFGDVG and IGH.

It belongs to the adenosylhomocysteinase family. Requires NAD(+) as cofactor.

The protein resides in the cytoplasm. The enzyme catalyses S-adenosyl-L-homocysteine + H2O = L-homocysteine + adenosine. The protein operates within amino-acid biosynthesis; L-homocysteine biosynthesis; L-homocysteine from S-adenosyl-L-homocysteine: step 1/1. In terms of biological role, may play a key role in the regulation of the intracellular concentration of adenosylhomocysteine. In Zymomonas mobilis subsp. mobilis (strain ATCC 31821 / ZM4 / CP4), this protein is Adenosylhomocysteinase.